Reading from the N-terminus, the 282-residue chain is Kanosamine-6-phosphate phosphatase (282 aa).

D25 (nucleophile) is an active-site residue. 2 residues coordinate Mg(2+): D25 and D27. K209 provides a ligand contact to phosphate. 2 residues coordinate Mg(2+): D232 and S233. N235 is a phosphate binding site.

Belongs to the HAD-like hydrolase superfamily. Cof family. In terms of assembly, homotetramer. Mg(2+) is required as a cofactor.

It catalyses the reaction D-kanosamine 6-phosphate + H2O = kanosamine + phosphate. It participates in antibiotic biosynthesis; kanosamine biosynthesis. In terms of biological role, involved in the biosynthesis of kanosamine (3-amino-3-deoxy-D-glucose), which is known to have antibiotic and antifungal properties, and to be a precursor of the antibiotic neotrehalosadiamine (3,3'-diamino-3,3'-dideoxy-alpha,beta-trehalose (NTD)). Catalyzes the dephosphorylation of kanosamine 6-phosphate to yield kanosamine. There is a trace amount of activity using glucosamine-6-phosphate. The polypeptide is Kanosamine-6-phosphate phosphatase (ntdB) (Bacillus subtilis (strain 168)).